The primary structure comprises 34 residues: Calcitonin-like peptide 1 (34 aa).

An intrachain disulfide couples C2 to C7. P34 is modified (proline amide).

This is Calcitonin-like peptide 1 from Odorrana schmackeri (Schmacker's frog).